We begin with the raw amino-acid sequence, 235 residues long: Small ribosomal subunit protein uS3 (235 aa).

Residues 39–107 enclose the KH type-2 domain; that stretch reads VRKFLNKELA…PAQINIAEVK (69 aa).

It belongs to the universal ribosomal protein uS3 family. In terms of assembly, part of the 30S ribosomal subunit. Forms a tight complex with proteins S10 and S14.

Functionally, binds the lower part of the 30S subunit head. Binds mRNA in the 70S ribosome, positioning it for translation. This is Small ribosomal subunit protein uS3 from Mannheimia succiniciproducens (strain KCTC 0769BP / MBEL55E).